A 72-amino-acid polypeptide reads, in one-letter code: High-potential iron-sulfur protein isozyme 1 (72 aa).

Position 1 is an N-carbamoylalanine; partial (A1). C34, C37, C51, and C65 together coordinate [4Fe-4S] cluster.

It belongs to the high-potential iron-sulfur protein (HiPIP) family. As to quaternary structure, homodimer.

Functionally, specific class of high-redox-potential 4Fe-4S ferredoxins. Functions in anaerobic electron transport in most purple and in some other photosynthetic bacteria and in at least one genus (Paracoccus) of halophilic, denitrifying bacteria. In Ectothiorhodospira mobilis, this protein is High-potential iron-sulfur protein isozyme 1.